The sequence spans 552 residues: CTP synthase (552 aa).

The amidoligase domain stretch occupies residues 1-267 (MAKFIFVTGG…AEQTLKLLRM (267 aa)). Position 13 (Ser-13) interacts with CTP. Ser-13 is a UTP binding site. ATP contacts are provided by residues 14 to 19 (SIGKGI) and Asp-71. Residues Asp-71 and Glu-141 each contribute to the Mg(2+) site. CTP-binding positions include 148–150 (DIE), 188–193 (KTKPTQ), and Lys-224. UTP is bound by residues 188-193 (KTKPTQ) and Lys-224. In terms of domain architecture, Glutamine amidotransferase type-1 spans 292–534 (DIAIVGKYVQ…IQAAGNHKSQ (243 aa)). Gly-354 contributes to the L-glutamine binding site. Cys-381 acts as the Nucleophile; for glutamine hydrolysis in catalysis. L-glutamine-binding positions include 382 to 385 (LGMQ), Glu-405, and Arg-462. Catalysis depends on residues His-507 and Glu-509. Residues 533–552 (SQPISDELDNQSTEMSISLS) are disordered.

The protein belongs to the CTP synthase family. Homotetramer.

It carries out the reaction UTP + L-glutamine + ATP + H2O = CTP + L-glutamate + ADP + phosphate + 2 H(+). The enzyme catalyses L-glutamine + H2O = L-glutamate + NH4(+). The catalysed reaction is UTP + NH4(+) + ATP = CTP + ADP + phosphate + 2 H(+). The protein operates within pyrimidine metabolism; CTP biosynthesis via de novo pathway; CTP from UDP: step 2/2. Allosterically activated by GTP, when glutamine is the substrate; GTP has no effect on the reaction when ammonia is the substrate. The allosteric effector GTP functions by stabilizing the protein conformation that binds the tetrahedral intermediate(s) formed during glutamine hydrolysis. Inhibited by the product CTP, via allosteric rather than competitive inhibition. Functionally, catalyzes the ATP-dependent amination of UTP to CTP with either L-glutamine or ammonia as the source of nitrogen. Regulates intracellular CTP levels through interactions with the four ribonucleotide triphosphates. In Picosynechococcus sp. (strain ATCC 27264 / PCC 7002 / PR-6) (Agmenellum quadruplicatum), this protein is CTP synthase.